The chain runs to 332 residues: Isopentenyl phosphate kinase (332 aa).

Residue M1 is modified to N-acetylmethionine. Residue 18–22 (KLGGA) coordinates ATP. Residue A96 participates in substrate binding. G97 is an ATP binding site. H101 and G202 together coordinate substrate. ATP-binding positions include D223, 228-233 (YDRPPS), G279, and K283.

It belongs to the isopentenyl phosphate kinase family.

It localises to the cytoplasm. It is found in the cytosol. The catalysed reaction is isopentenyl phosphate + ATP = isopentenyl diphosphate + ADP. Catalyzes the formation of isopentenyl diphosphate (IPP), the universal five-carbon isoprenoid building block of all natural isoprenoids. Acts in parallel with the mevalonate (MVA) pathway and plays an important role in regulating the formation of both MVA and methylerythritol phosphate (MEP) pathway-derived terpenoid compounds by controlling the ratio of isopentenyl phosphate (IP) and dimethylallyl phosphate (DMAP) to isopentenyl diphosphate (IPP) and dimethylallyl diphosphate (DMAPP). Controls the levels of IP and DMAP that are competitive inhibitors of the farnesyl diphosphate synthase. Regulates the production of farnesyl diphosphate-derived terpenoids in the cytosol, and geranyl diphosphate-derived compounds in plastids. The protein is Isopentenyl phosphate kinase of Arabidopsis thaliana (Mouse-ear cress).